A 432-amino-acid polypeptide reads, in one-letter code: Serine hydroxymethyltransferase (432 aa).

(6S)-5,6,7,8-tetrahydrofolate contacts are provided by residues Leu-127 and Gly-131–Leu-133. The residue at position 236 (Lys-236) is an N6-(pyridoxal phosphate)lysine.

Belongs to the SHMT family. As to quaternary structure, homodimer. Requires pyridoxal 5'-phosphate as cofactor.

It is found in the cytoplasm. The enzyme catalyses (6R)-5,10-methylene-5,6,7,8-tetrahydrofolate + glycine + H2O = (6S)-5,6,7,8-tetrahydrofolate + L-serine. The protein operates within one-carbon metabolism; tetrahydrofolate interconversion. Its pathway is amino-acid biosynthesis; glycine biosynthesis; glycine from L-serine: step 1/1. In terms of biological role, catalyzes the reversible interconversion of serine and glycine with tetrahydrofolate (THF) serving as the one-carbon carrier. This reaction serves as the major source of one-carbon groups required for the biosynthesis of purines, thymidylate, methionine, and other important biomolecules. Also exhibits THF-independent aldolase activity toward beta-hydroxyamino acids, producing glycine and aldehydes, via a retro-aldol mechanism. In Rhizobium etli (strain ATCC 51251 / DSM 11541 / JCM 21823 / NBRC 15573 / CFN 42), this protein is Serine hydroxymethyltransferase.